Here is a 104-residue protein sequence, read N- to C-terminus: RRLLKDLDIRINQIIPEGGSVEDSKNLPKARFNLIPYREVGLMTAMYLNKEFGMPYVSTTPMGAVDMAECIRQIKKYIDTLAAPILSSKRVDYESYIDGQTRFV.

It belongs to the ChlB/BchB/BchZ family. In terms of assembly, protochlorophyllide reductase is composed of three subunits; ChlL, ChlN and ChlB. Forms a heterotetramer of two ChlB and two ChlN subunits. The cofactor is [4Fe-4S] cluster.

It is found in the plastid. It localises to the chloroplast. The enzyme catalyses chlorophyllide a + oxidized 2[4Fe-4S]-[ferredoxin] + 2 ADP + 2 phosphate = protochlorophyllide a + reduced 2[4Fe-4S]-[ferredoxin] + 2 ATP + 2 H2O. Its pathway is porphyrin-containing compound metabolism; chlorophyll biosynthesis (light-independent). Component of the dark-operative protochlorophyllide reductase (DPOR) that uses Mg-ATP and reduced ferredoxin to reduce ring D of protochlorophyllide (Pchlide) to form chlorophyllide a (Chlide). This reaction is light-independent. The NB-protein (ChlN-ChlB) is the catalytic component of the complex. The polypeptide is Light-independent protochlorophyllide reductase subunit B (chlB) (Picea mariana (Black spruce)).